The chain runs to 197 residues: Fe/S biogenesis protein NfuA (197 aa).

Residues cysteine 155 and cysteine 158 each contribute to the [4Fe-4S] cluster site.

Belongs to the NfuA family. In terms of assembly, homodimer. It depends on [4Fe-4S] cluster as a cofactor.

In terms of biological role, involved in iron-sulfur cluster biogenesis. Binds a 4Fe-4S cluster, can transfer this cluster to apoproteins, and thereby intervenes in the maturation of Fe/S proteins. Could also act as a scaffold/chaperone for damaged Fe/S proteins. This is Fe/S biogenesis protein NfuA from Pseudomonas syringae pv. syringae (strain B728a).